Consider the following 64-residue polypeptide: MKASELNEKSVDELKQELLTQLEAQFKLRMQKSTGQLNQTHLVKQTRRDIARIKTVLRQKAATK.

It belongs to the universal ribosomal protein uL29 family.

The chain is Large ribosomal subunit protein uL29 from Teredinibacter turnerae (strain ATCC 39867 / T7901).